The following is a 559-amino-acid chain: BTB/POZ domain-containing protein At5g47800 (559 aa).

The BTB domain maps to 28–96; the sequence is NDLVIRINNT…CYDITINLSA (69 aa). Residues 199-476 enclose the NPH3 domain; sequence DWWTEDISDL…VQALFFDQES (278 aa). A Phosphotyrosine modification is found at tyrosine 417. The span at 477–489 shows a compositional bias: low complexity; it reads GSKGASSRSESQE. Disordered stretches follow at residues 477–502 and 524–559; these read GSKG…TDEH and EGCK…SRDR. Basic and acidic residues-rich tracts occupy residues 492–502 and 524–541; these read TRGKETPTDEH and EGCK…DPKK.

This sequence belongs to the NPH3 family.

It participates in protein modification; protein ubiquitination. May act as a substrate-specific adapter of an E3 ubiquitin-protein ligase complex (CUL3-RBX1-BTB) which mediates the ubiquitination and subsequent proteasomal degradation of target proteins. This Arabidopsis thaliana (Mouse-ear cress) protein is BTB/POZ domain-containing protein At5g47800.